The chain runs to 435 residues: MNFRDNSNIEYRKLDAPLKFINKNYITIGDKDREKYSKILADILEAFRRKMAESDEVYKTFEGAVHYTGSAYDKVKVGKPDEFDLNIVMKLPAAWDYHNDIEVKNSSPSYVTINVKSGCERSYRDPSFLNKYQKGIRIWTDNEGYFIQEQFHAWMEGVVKKALNKFPSHGLEYIIQTNGHAIYVKTKKSGPAVTLQCESQDRKIKIDVDLVPVIQFNNNSSTLWLSPPVRQRPLLCCKKTWCAVPKPKKNNGFTNKNREWRVSFTDQERDLLYNKGRIKNLIRQIKKLKSVHEETKSLPSYYVKTIFLWALDDKSLDQNMWTQWSDGALFMFMLKRLHSHLDENKIPYYWDSRCNLLDALGYAVNNMKYKIQRIIKEIDNSLDNPEVLAKYLLTADEFADFRRRYGSIEEGFESLSIDSAPPVSDLRGDSRCCIL.

Residues S70 and 82-84 (EFD) each bind ATP. Residues E82, D84, and D209 each contribute to the Mg(2+) site. D209 lines the GTP pocket. ATP is bound by residues K286 and 300–304 (SYYVK). Mn(2+)-binding residues include L311, D312, and D317.

This sequence belongs to the mab-21 family. Mg(2+) is required as a cofactor. Requires Mn(2+) as cofactor.

It catalyses the reaction GTP + ATP = 2',3'-cGAMP + 2 diphosphate. It carries out the reaction GTP + ATP = pppGp(2'-5')A + diphosphate. The catalysed reaction is pppGp(2'-5')A = 2',3'-cGAMP + diphosphate. Nucleotidyltransferase that catalyzes the formation of cyclic GMP-AMP (2',3'-cGAMP) from ATP and GTP and plays a key role in innate immunity. Directly binds some unknown ligand, activating the nucleotidyltransferase activity, leading to synthesis of 2',3'-cGAMP, a second messenger that binds to and activates Sting, thereby triggering the immune response via activation of the NF-kappa-B transcription factor. The chain is Cyclic GMP-AMP synthase-like receptor from Ctenocephalides felis (Cat flea).